The following is a 226-amino-acid chain: Brain acid soluble protein 1 (226 aa).

Residues 1-11 (MGGKLSKKKKG) are compositionally biased toward basic residues. The interval 1–226 (MGGKLSKKKK…SSEQSVAVKE (226 aa)) is disordered. The N-myristoyl glycine moiety is linked to residue glycine 2. The span at 15 to 27 (NDEKAKDKDKKAE) shows a compositional bias: basic and acidic residues. Lysine 25 is covalently cross-linked (Glycyl lysine isopeptide (Lys-Gly) (interchain with G-Cter in SUMO2)). Phosphothreonine occurs at positions 31 and 36. A Phosphoserine modification is found at serine 40. The span at 49-94 (TEVKESTEEKPKDAADGEAKAEEKEADKAAAAKEEAPKAEPEKSEG) shows a compositional bias: basic and acidic residues. A Glycyl lysine isopeptide (Lys-Gly) (interchain with G-Cter in SUMO2) cross-link involves residue lysine 86. 3 positions are modified to phosphoserine: serine 92, serine 128, and serine 131. Composition is skewed to low complexity over residues 106–140 (PEQE…GAAP) and 150–226 (APAA…AVKE). Residue lysine 159 forms a Glycyl lysine isopeptide (Lys-Gly) (interchain with G-Cter in SUMO2) linkage. A phosphoserine mark is found at serine 160, serine 167, serine 169, serine 173, serine 192, and serine 218.

This sequence belongs to the BASP1 family.

The protein resides in the cell membrane. It localises to the cell projection. Its subcellular location is the growth cone. The polypeptide is Brain acid soluble protein 1 (Basp1) (Mus musculus (Mouse)).